We begin with the raw amino-acid sequence, 498 residues long: 3-octaprenyl-4-hydroxybenzoate carboxy-lyase (498 aa).

N177 contacts Mn(2+). Residues 180-182 (IYR), 194-196 (RWL), and 199-200 (RG) each bind prenylated FMN. E243 contacts Mn(2+). The Proton donor role is filled by D292.

The protein belongs to the UbiD family. Homohexamer. Prenylated FMN is required as a cofactor. Mn(2+) serves as cofactor.

Its subcellular location is the cell membrane. It carries out the reaction a 4-hydroxy-3-(all-trans-polyprenyl)benzoate + H(+) = a 2-(all-trans-polyprenyl)phenol + CO2. Its pathway is cofactor biosynthesis; ubiquinone biosynthesis. Its function is as follows. Catalyzes the decarboxylation of 3-octaprenyl-4-hydroxy benzoate to 2-octaprenylphenol, an intermediate step in ubiquinone biosynthesis. The chain is 3-octaprenyl-4-hydroxybenzoate carboxy-lyase from Methylococcus capsulatus (strain ATCC 33009 / NCIMB 11132 / Bath).